The following is a 621-amino-acid chain: TOX high mobility group box family member 4 (621 aa).

Disordered regions lie at residues 153–227 (LGLS…QKPV) and 305–333 (LDPA…ASIE). Phosphothreonine is present on Thr176. Phosphoserine occurs at positions 178, 181, and 182. Residues 183–193 (LHEDGVEDFRR) are compositionally biased toward basic and acidic residues. Basic residues predominate over residues 208-218 (KQKAPKKRKKK). A Nuclear localization signal motif is present at residues 213-218 (KKRKKK). A DNA-binding region (HMG box) is located at residues 223-291 (PQKPVSAYAL…EYLKALAAYK (69 aa)). Residues 307 to 319 (PAPPSQTPSPPPM) are compositionally biased toward pro residues. Thr313 bears the Phosphothreonine mark. At Ser315 the chain carries Phosphoserine. Residues 320-333 (ATVDPASPAPASIE) are compositionally biased toward low complexity. Asymmetric dimethylarginine is present on Arg481. Residues 510 to 525 (PTVESSPERPMNNSPE) show a composition bias toward polar residues. The segment at 510–529 (PTVESSPERPMNNSPEAHTV) is disordered. Phosphoserine is present on residues Ser533, Ser550, Ser552, Ser560, Ser562, and Ser567.

As to quaternary structure, component of the PNUTS-PP1 phosphatase complex, composed of PPP1R10/PNUTS, TOX4, WDR82 and PPP1CA or PPP1CB or PPP1CC. Interacts with PPP1R10/PNUTS. Interacts with FOXO1 and CREB1 (increased by cAMP); FOXO1 and CREB1 are required for full induction of TOX4-dependent activity and the interactions are inhibited by insulin. As to expression, expressed in liver (at protein level).

Its subcellular location is the nucleus. It is found in the chromosome. Its activity is regulated as follows. In liver, recruited to target gene promoters following treatment with dexamethasone and cAMP. Binding is decreased in presence of insulin. Transcription factor that modulates cell fate reprogramming from the somatic state to the pluripotent and neuronal fate. In liver, controls the expression of hormone-regulated gluconeogenic genes such as G6PC1 and PCK1. This regulation is independent of the insulin receptor activation. Also acts as a regulatory component of protein phosphatase 1 (PP1) complexes. Component of the PNUTS-PP1 protein phosphatase complex, a PP1 complex that regulates RNA polymerase II transcription pause-release. PNUTS-PP1 also plays a role in the control of chromatin structure and cell cycle progression during the transition from mitosis into interphase. This is TOX high mobility group box family member 4 from Homo sapiens (Human).